We begin with the raw amino-acid sequence, 374 residues long: Anhydro-N-acetylmuramic acid kinase (374 aa).

15-22 (GTSADGID) is a binding site for ATP.

The protein belongs to the anhydro-N-acetylmuramic acid kinase family.

The enzyme catalyses 1,6-anhydro-N-acetyl-beta-muramate + ATP + H2O = N-acetyl-D-muramate 6-phosphate + ADP + H(+). It participates in amino-sugar metabolism; 1,6-anhydro-N-acetylmuramate degradation. Its pathway is cell wall biogenesis; peptidoglycan recycling. In terms of biological role, catalyzes the specific phosphorylation of 1,6-anhydro-N-acetylmuramic acid (anhMurNAc) with the simultaneous cleavage of the 1,6-anhydro ring, generating MurNAc-6-P. Is required for the utilization of anhMurNAc either imported from the medium or derived from its own cell wall murein, and thus plays a role in cell wall recycling. The sequence is that of Anhydro-N-acetylmuramic acid kinase from Xanthomonas axonopodis pv. citri (strain 306).